The sequence spans 37 residues: Photosystem I reaction center subunit IX (37 aa).

Residues 4–24 form a helical membrane-spanning segment; that stretch reads FLTTAPVVAAIWFTLTAGILI.

Belongs to the PsaJ family.

It is found in the cellular thylakoid membrane. Functionally, may help in the organization of the PsaE and PsaF subunits. The sequence is that of Photosystem I reaction center subunit IX from Synechococcus sp. (strain WH7803).